Reading from the N-terminus, the 492-residue chain is N-succinylglutamate 5-semialdehyde dehydrogenase (492 aa).

An NAD(+)-binding site is contributed by 220–225; that stretch reads GSASTG. Active-site residues include Glu243 and Cys277.

Belongs to the aldehyde dehydrogenase family. AstD subfamily.

The enzyme catalyses N-succinyl-L-glutamate 5-semialdehyde + NAD(+) + H2O = N-succinyl-L-glutamate + NADH + 2 H(+). It participates in amino-acid degradation; L-arginine degradation via AST pathway; L-glutamate and succinate from L-arginine: step 4/5. Functionally, catalyzes the NAD-dependent reduction of succinylglutamate semialdehyde into succinylglutamate. In Salmonella gallinarum (strain 287/91 / NCTC 13346), this protein is N-succinylglutamate 5-semialdehyde dehydrogenase.